A 393-amino-acid chain; its full sequence is Chalcone synthase (393 aa).

Residue Cys164 is part of the active site.

This sequence belongs to the thiolase-like superfamily. Chalcone/stilbene synthases family.

The catalysed reaction is (E)-4-coumaroyl-CoA + 3 malonyl-CoA + 3 H(+) = 2',4,4',6'-tetrahydroxychalcone + 3 CO2 + 4 CoA. It participates in secondary metabolite biosynthesis; flavonoid biosynthesis. In terms of biological role, the primary product of this enzyme is 4,2',4',6'-tetrahydroxychalcone (also termed naringenin-chalcone or chalcone) which can under specific conditions spontaneously isomerize into naringenin. The sequence is that of Chalcone synthase (CHS) from Vitis vinifera (Grape).